A 426-amino-acid polypeptide reads, in one-letter code: Enolase 2 (426 aa).

Glutamine 163 lines the (2R)-2-phosphoglycerate pocket. The Proton donor role is filled by glutamate 205. Positions 242, 285, and 312 each coordinate Mg(2+). Lysine 337, arginine 366, serine 367, and lysine 388 together coordinate (2R)-2-phosphoglycerate. The active-site Proton acceptor is the lysine 337.

It belongs to the enolase family. Mg(2+) serves as cofactor.

It localises to the cytoplasm. The protein localises to the secreted. It is found in the cell surface. It catalyses the reaction (2R)-2-phosphoglycerate = phosphoenolpyruvate + H2O. The protein operates within carbohydrate degradation; glycolysis; pyruvate from D-glyceraldehyde 3-phosphate: step 4/5. Its function is as follows. Catalyzes the reversible conversion of 2-phosphoglycerate (2-PG) into phosphoenolpyruvate (PEP). It is essential for the degradation of carbohydrates via glycolysis. The chain is Enolase 2 from Methanospirillum hungatei JF-1 (strain ATCC 27890 / DSM 864 / NBRC 100397 / JF-1).